A 278-amino-acid polypeptide reads, in one-letter code: MLLELLKAIFLGIIEGVTEWLPVSSTGHLILVQEFVKLNQSKNFLEMFNIVIQLGAILAVMTIYFKKLNPFQPGKTKRDIQLTWQLWAKVVIACIPSILIAVPLDNWFEAHFNFMVPIAIALIVYGIAFIWIENRNRGIEPQVTDLAKMSYKTALLIGCFQVLSIVPGTSRSGATILGAIILGTSRSVAADFTFFLGIPTMFGYSGLKAVKYFLDGNSLNMEQVWILLVASVTAYLVSLVVIRFLTDFVKKHDFTVFGYYRIILGAILLVYAFITFLF.

The next 6 helical transmembrane spans lie at 44–64 (FLEM…MTIY), 84–104 (WQLW…AVPL), 112–132 (FNFM…FIWI), 187–207 (SVAA…YSGL), 224–244 (VWIL…VIRF), and 254–274 (FTVF…YAFI).

It belongs to the UppP family.

The protein localises to the cell membrane. The catalysed reaction is di-trans,octa-cis-undecaprenyl diphosphate + H2O = di-trans,octa-cis-undecaprenyl phosphate + phosphate + H(+). Its function is as follows. Catalyzes the dephosphorylation of undecaprenyl diphosphate (UPP). Confers resistance to bacitracin. In Streptococcus suis (strain 98HAH33), this protein is Undecaprenyl-diphosphatase.